The sequence spans 258 residues: Probable parvulin-type peptidyl-prolyl cis-trans isomerase (258 aa).

The N-terminal stretch at 1–19 is a signal peptide; that stretch reads MKRIAMLAAACVIAVPAFA. Residues 127–219 enclose the PpiC domain; sequence KMEYKVRHIL…FGWHVIQVDD (93 aa).

Belongs to the PpiC/parvulin rotamase family.

The enzyme catalyses [protein]-peptidylproline (omega=180) = [protein]-peptidylproline (omega=0). The chain is Probable parvulin-type peptidyl-prolyl cis-trans isomerase from Bordetella parapertussis (strain 12822 / ATCC BAA-587 / NCTC 13253).